A 131-amino-acid chain; its full sequence is Ribosome-binding factor A (131 aa).

It belongs to the RbfA family. As to quaternary structure, monomer. Binds 30S ribosomal subunits, but not 50S ribosomal subunits or 70S ribosomes.

It localises to the cytoplasm. Its function is as follows. One of several proteins that assist in the late maturation steps of the functional core of the 30S ribosomal subunit. Associates with free 30S ribosomal subunits (but not with 30S subunits that are part of 70S ribosomes or polysomes). Required for efficient processing of 16S rRNA. May interact with the 5'-terminal helix region of 16S rRNA. This chain is Ribosome-binding factor A, found in Gloeothece citriformis (strain PCC 7424) (Cyanothece sp. (strain PCC 7424)).